We begin with the raw amino-acid sequence, 105 residues long: Iron-sulfur cluster assembly protein CyaY (105 aa).

Belongs to the frataxin family.

Its function is as follows. Involved in iron-sulfur (Fe-S) cluster assembly. May act as a regulator of Fe-S biogenesis. The protein is Iron-sulfur cluster assembly protein CyaY of Paraburkholderia xenovorans (strain LB400).